Reading from the N-terminus, the 358-residue chain is Beta-lactamase (358 aa).

S60 acts as the Acyl-ester intermediate in catalysis. Y146 serves as the catalytic Proton acceptor. Substrate is bound at residue K311–G313.

It belongs to the class-C beta-lactamase family.

Its subcellular location is the periplasm. It carries out the reaction a beta-lactam + H2O = a substituted beta-amino acid. This protein is a serine beta-lactamase with a substrate specificity for cephalosporins. The polypeptide is Beta-lactamase (Pseudomonas fluorescens).